The sequence spans 115 residues: ESX-1 secretion-associated protein EspL (115 aa).

The polypeptide is ESX-1 secretion-associated protein EspL (Mycobacterium tuberculosis (strain CDC 1551 / Oshkosh)).